The chain runs to 191 residues: Cell division protein SepF (191 aa).

Residues E156–G167 are compositionally biased toward polar residues. Residues E156 to L191 form a disordered region.

This sequence belongs to the SepF family. Homodimer. Interacts with FtsZ.

Its subcellular location is the cytoplasm. Cell division protein that is part of the divisome complex and is recruited early to the Z-ring. Probably stimulates Z-ring formation, perhaps through the cross-linking of FtsZ protofilaments. Its function overlaps with FtsA. This Prochlorococcus marinus (strain NATL2A) protein is Cell division protein SepF.